Consider the following 860-residue polypeptide: MQEQYRPEDIETQVQLHWQEKQTFKVTEDASKEKYYCLSMLPYPSGRLHMGHVRNYTIGDVISRYQRMLGKNVLQPIGWDAFGLPAEGAAVKNNTAPAPWTYDNIEYMKNQLKLLGFGYDWDREIATCKPDYYRWEQWFFTKLYEKGMVYKKTSAVNWCPHDLTVLANEQVIDGCCWRCDTKVERKEIPQWFIKITDYAEQLLNDLDTLESWPEQVKTMQRNWIGRSEGVDIVFDVVDSEEKLSVYTTRPDTFMGVTYVAVAAGHPLSLQAAATNPALADFVAECRNTKVAEAEMATMEKKGMATGLYAIHPLTGEKLPIWAANFVLMDYGTGAVMAVPGHDARDWEFATKYNLPIKPVILAADGSEPDLSQEAMTEKGTLFNSGEFDGLNHEDGFNAIADKLVALGVGQRKVNYRLRDWGVSRQRYWGAPIPMVTLEDGTVVPTPEDQLPVILPEDVVMDGISSPIKADPEWAKTTVNGIPGLRETDTFDTFMESSWYYARYTCPQYDDGMLDPAAANYWLPVDQYVGGIEHAIMHLMYFRFFHKLLRDAGLVDSDEPAKRLLCQGMVLADAFYYTGNNGERIWVSPVDAIVERDDKGRIVKAVDAEGHELVYAGMSKMSKSKNNGIDPQVMVEKYGADTVRLFMMFASPAEMTLEWQESGVEGANRFLKRVWRLAFDHTAKGAVKPLDIASLTEEQKSLRRDLHKTIAKVTDDVGRRQTFNTAIAAVMELMNKLGRAPQETEQDRALMQEALLAVVRMLYPFTPHVCFSLWQALGGEGDIDTAPWPIADEQAMVEDSKLVVVQVNGKVRGRITVPADATEQQVRERAGQEHLVAKYLDGITVRKVIYVPGKLLNLVVG.

The 'HIGH' region signature appears at 42–52; it reads PYPSGRLHMGH. The 'KMSKS' region signature appears at 619-623; the sequence is KMSKS. An ATP-binding site is contributed by Lys622.

This sequence belongs to the class-I aminoacyl-tRNA synthetase family.

The protein resides in the cytoplasm. It carries out the reaction tRNA(Leu) + L-leucine + ATP = L-leucyl-tRNA(Leu) + AMP + diphosphate. The protein is Leucine--tRNA ligase of Yersinia pestis bv. Antiqua (strain Angola).